A 314-amino-acid chain; its full sequence is 4-diphosphocytidyl-2-C-methyl-D-erythritol kinase (314 aa).

The active site involves Lys-11. 95 to 105 (PIGAGLAGGST) lines the ATP pocket. The active site involves Asp-137.

Belongs to the GHMP kinase family. IspE subfamily.

The catalysed reaction is 4-CDP-2-C-methyl-D-erythritol + ATP = 4-CDP-2-C-methyl-D-erythritol 2-phosphate + ADP + H(+). The protein operates within isoprenoid biosynthesis; isopentenyl diphosphate biosynthesis via DXP pathway; isopentenyl diphosphate from 1-deoxy-D-xylulose 5-phosphate: step 3/6. Functionally, catalyzes the phosphorylation of the position 2 hydroxy group of 4-diphosphocytidyl-2C-methyl-D-erythritol. In Synechococcus elongatus (strain ATCC 33912 / PCC 7942 / FACHB-805) (Anacystis nidulans R2), this protein is 4-diphosphocytidyl-2-C-methyl-D-erythritol kinase.